The chain runs to 278 residues: MGQALRKLTAADYPVVVQEPRKKVLAVKGLVKAYKSQHRVLDNINFELHAGEFVAIIGRSGAGKSTLLHILNGTIPTSAGEIINYHENGDTQNIAALTTKQMRKWRAKCGMIFQDFCLVPRLDVITNVLLGRLSYTSTLKSFFKLFSEQDQARAIELLQWLNMLPHALQRAENLSGGQMQRVAICRAMMQNPKILLADEPVASLDPKNTTRIMNTLQKISENDIAVIVNLHSVDLVKDYCTRVIGIAHGRIIFDGPPSMLNDSIIQDIYSDESAELLH.

Residues 25–273 (LAVKGLVKAY…IIQDIYSDES (249 aa)) enclose the ABC transporter domain. 58 to 65 (GRSGAGKS) contacts ATP.

This sequence belongs to the ABC transporter superfamily. Phosphonates importer (TC 3.A.1.9.1) family. As to quaternary structure, the complex is composed of two ATP-binding proteins (PhnC), two transmembrane proteins (PhnE) and a solute-binding protein (PhnD).

Its subcellular location is the cell inner membrane. It carries out the reaction phosphonate(out) + ATP + H2O = phosphonate(in) + ADP + phosphate + H(+). In terms of biological role, part of the ABC transporter complex PhnCDE involved in phosphonates import. Responsible for energy coupling to the transport system. The chain is Phosphonates import ATP-binding protein PhnC from Yersinia pestis bv. Antiqua (strain Antiqua).